An 88-amino-acid polypeptide reads, in one-letter code: MPNIKSAIKRTKTNNERRVHNATIKSAMRTAIKQVEASVANNEADKAKTALTEAAKRIDKAVKTGLVHKNTAARYKSRLAKKVNGLSA.

It belongs to the bacterial ribosomal protein bS20 family. Part of the 30S ribosomal subunit.

Its function is as follows. Binds directly to 16S ribosomal RNA. This is Small ribosomal subunit protein bS20 (rpsT) from Bacillus subtilis (strain 168).